A 141-amino-acid chain; its full sequence is Hemoglobin subunit alpha (141 aa).

The region spanning valine 1–arginine 141 is the Globin domain. Phosphoserine is present on serine 3. Lysine 7 bears the N6-succinyllysine mark. Threonine 8 is modified (phosphothreonine). Lysine 11 is subject to N6-succinyllysine. At lysine 16 the chain carries N6-acetyllysine; alternate. Lysine 16 is subject to N6-succinyllysine; alternate. Tyrosine 24 bears the Phosphotyrosine mark. The residue at position 35 (serine 35) is a Phosphoserine. Lysine 40 carries the N6-succinyllysine modification. Serine 49 carries the phosphoserine modification. Histidine 58 provides a ligand contact to O2. Position 87 (histidine 87) interacts with heme b. Serine 102 carries the phosphoserine modification. Threonine 108 bears the Phosphothreonine mark. 2 positions are modified to phosphoserine: serine 124 and serine 131. Phosphothreonine occurs at positions 134 and 137. Phosphoserine is present on serine 138.

This sequence belongs to the globin family. Heterotetramer of two alpha chains and two beta chains. Red blood cells.

Involved in oxygen transport from the lung to the various peripheral tissues. In terms of biological role, hemopressin acts as an antagonist peptide of the cannabinoid receptor CNR1. Hemopressin-binding efficiently blocks cannabinoid receptor CNR1 and subsequent signaling. The sequence is that of Hemoglobin subunit alpha (HBA) from Semnopithecus entellus (Northern plains gray langur).